Reading from the N-terminus, the 555-residue chain is MGSESLVHVFLVSFIGQGHVNPLLRLGKRLAAKGLLVTFCTAECVGKEMRKSNGITDEPKPVGDGFIRFEFFKDRWAEDEPMRQDLDLYLPQLELVGKEVIPEMIKKNAEQGRPVSCLINNPFIPWVCDVAESLGLPSAMLWVQSAACLAAYYHYYHGLVPFPSESDMFCDVQIPSMPLLKYDEVPSFLYPTSPYPFLRRAILGQYGNLEKPFCILMDTFQELESEIIEYMARLCPIKAVGPLFKNPKAQNAVRGDFMEADDSIIGWLDTKPKSSVVYISFGSVVYLKQEQVDEIAHGLLSSGVSFIWVMKPPHPDSGFELLVLPEGFLEKAGDRGKVVQWSPQEKILEHPSTACFVTHCGWNSTMESLTSGMPVVAFPQWGDQVTDAKYLVDEFKVGVRMCRGEAEDRVIPRDEVEKCLLEATSGSKAAEMKQNALKWKAAAEAAFSEGGSSDRNLQAFVDEVRRISASLNSKSSAVGYVKSKINGVVEYVDSKLNGKAAPVEEANTRTNGIAKVEQPKAANGKVEIAELTPINGKVEIAELKPINGKVELVES.

H19 (proton acceptor) is an active-site residue. H19 provides a ligand contact to an anthocyanidin. Positions 344, 359, 362, 363, 364, and 367 each coordinate UDP-alpha-D-glucose. G382 contacts an anthocyanidin. UDP-alpha-D-glucose is bound by residues D383 and Q384.

This sequence belongs to the UDP-glycosyltransferase family. Highest expression detected in fruit, with lower levels detected in flower and petiole. Barely detectable in leaf and root.

The catalysed reaction is (E)-cinnamate + UDP-alpha-D-glucose = 1-O-(trans-cinnamoyl)-beta-D-glucose + UDP. Functionally, broad spectrum multifunctional glucosyltransferase. Catalyzes the formation of cinnamic acid and p-coumaric acid glucose esters during fruit ripening. Accepted substrates range from derivatives of cinnamic acid and benzoic acid to heterocyclic and aliphatic compounds, resulting in the formation of O- and S-glucose esters and O-glucosides. May also be involved in detoxification of xenobiotics. This Fragaria ananassa (Strawberry) protein is Cinnamate beta-D-glucosyltransferase.